A 63-amino-acid polypeptide reads, in one-letter code: Large ribosomal subunit protein uL30 (63 aa).

The protein belongs to the universal ribosomal protein uL30 family. In terms of assembly, part of the 50S ribosomal subunit.

This Rickettsia typhi (strain ATCC VR-144 / Wilmington) protein is Large ribosomal subunit protein uL30.